The following is a 228-amino-acid chain: Prolactin-2A1 (228 aa).

An N-terminal signal peptide occupies residues 1-29 (MQLSITHPCCWTLRLLLVSNLLLWENVAL). 2 disulfides stabilise this stretch: C87–C203 and C220–C228.

It belongs to the somatotropin/prolactin family. As to expression, expressed specifically in the placenta. Highly expressed in invasive trophoblast cells lining the central placental vessel.

It is found in the secreted. The protein is Prolactin-2A1 (Prl2a1) of Rattus norvegicus (Rat).